The following is a 146-amino-acid chain: 3-dehydroquinate dehydratase (146 aa).

The active-site Proton acceptor is Tyr23. Substrate-binding residues include Asn74, His80, and Asp87. Catalysis depends on His100, which acts as the Proton donor. Residues 101–102 (IS) and Arg111 contribute to the substrate site.

The protein belongs to the type-II 3-dehydroquinase family. Homododecamer.

The enzyme catalyses 3-dehydroquinate = 3-dehydroshikimate + H2O. Its pathway is metabolic intermediate biosynthesis; chorismate biosynthesis; chorismate from D-erythrose 4-phosphate and phosphoenolpyruvate: step 3/7. In terms of biological role, catalyzes a trans-dehydration via an enolate intermediate. The polypeptide is 3-dehydroquinate dehydratase (Bacillus cereus (strain ATCC 10987 / NRS 248)).